We begin with the raw amino-acid sequence, 251 residues long: Pyruvate formate-lyase-activating enzyme (251 aa).

The 230-residue stretch at 15-244 folds into the Radical SAM core domain; sequence VDGPGLRYIL…KAAYRYVNFK (230 aa). Residues cysteine 29, cysteine 33, and cysteine 36 each contribute to the [4Fe-4S] cluster site. Residues 35-37, glycine 79, 134-136, and histidine 207 each bind S-adenosyl-L-methionine; these read YCH and DIK.

It belongs to the organic radical-activating enzymes family. [4Fe-4S] cluster is required as a cofactor.

The protein localises to the cytoplasm. It carries out the reaction glycyl-[formate C-acetyltransferase] + reduced [flavodoxin] + S-adenosyl-L-methionine = glycin-2-yl radical-[formate C-acetyltransferase] + semiquinone [flavodoxin] + 5'-deoxyadenosine + L-methionine + H(+). Activation of pyruvate formate-lyase under anaerobic conditions by generation of an organic free radical, using S-adenosylmethionine and reduced flavodoxin as cosubstrates to produce 5'-deoxy-adenosine. This chain is Pyruvate formate-lyase-activating enzyme (pflA), found in Staphylococcus aureus (strain N315).